The sequence spans 943 residues: MPSTSFPVPSKFPLGPAAAVFGRGETLGPAPRAGGTMKSAEEEHYGYASSNVSPALPLPTAHSTLPAPCHNLQTSTPGIIPPADHPSGYGAALDGGPAGYFLSSGHTRPDGAPALESPRIEITSCLGLYHNNNQFFHDVEVEDVLPSSKRSPSTATLSLPSLEAYRDPSCLSPASSLSSRSCNSEASSYESNYSYPYASPQTSPWQSPCVSPKTTDPEEGFPRGLGACTLLGSPRHSPSTSPRASVTEESWLGARSSRPASPCNKRKYSLNGRQPPYSPHHSPTPSPHGSPRVSVTDDSWLGNTTQYTSSAIVAAINALTTDSSLDLGDGVPVKSRKTTLEQPPSVALKVEPVGEDLGSPPPPADFAPEDYSSFQHIRKGGFCDQYLAVPQHPYQWAKPKPLSPTSYMSPTLPALDWQLPSHSGPYELRIEVQPKSHHRAHYETEGSRGAVKASAGGHPIVQLHGYLENEPLMLQLFIGTADDRLLRPHAFYQVHRITGKTVSTTSHEAILSNTKVLEIPLLPENSMRAVIDCAGILKLRNSDIELRKGETDIGRKNTRVRLVFRVHVPQPSGRTLSLQVASNPIECSQRSAQELPLVEKQSTDSYPVVGGKKMVLSGHNFLQDSKVIFVEKAPDGHHVWEMEAKTDRDLCKPNSLVVEIPPFRNQRITSPVHVSFYVCNGKRKRSQYQRFTYLPANVPIIKTEPTDDYEPAPTCGPVSQGLSPLPRPYYSQQLAMPPDPSSCLVAGFPPCPQRSTLMPAAPGVSPKLHDLSPAAYTKGVASPGHCHLGLPQPAGEAPAVQDVPRPVATHPGSPGQPPPALLPQQVSAPPSSSCPPGLEHSLCPSSPSPPLPPATQEPTCLQPCSPACPPATGRPQHLPSTVRRDESPTAGPRLLPEVHEDGSPNLAPIPVTVKREPEELDQLYLDDVNEIIRNDLSSTSTHS.

A disordered region spans residues 22–48 (GRGETLGPAPRAGGTMKSAEEEHYGYA). The segment at 118-123 (PRIEIT) is calcineurin-binding. Residues 126 to 218 (LGLYHNNNQF…CVSPKTTDPE (93 aa)) are transactivation domain A (TAD-A). The tract at residues 200–298 (PQTSPWQSPC…GSPRVSVTDD (99 aa)) is disordered. The segment covering 201-214 (QTSPWQSPCVSPKT) has biased composition (polar residues). 2 repeat units span residues 203-219 (SPWQSPCVSPKTTDPEE) and 233-249 (SPRHSPSTSPRASVTEE). Residues 203 to 298 (SPWQSPCVSP…GSPRVSVTDD (96 aa)) form a 3 X SP repeats region. 2 positions are modified to phosphoserine: serine 233 and serine 237. The span at 236–248 (HSPSTSPRASVTE) shows a compositional bias: polar residues. A Phosphoserine; by PKA modification is found at serine 245. A Nuclear localization signal motif is present at residues 265 to 267 (KRK). Position 269 is a phosphoserine; by PKA (serine 269). Residues 276–288 (PYSPHHSPTPSPH) are compositionally biased toward pro residues. Repeat 3 spans residues 282–298 (SPTPSPHGSPRVSVTDD). Serine 294 bears the Phosphoserine; by PKA mark. The Nuclear export signal signature appears at 310–321 (SAIVAAINALTT). Positions 410–592 (PTLPALDWQL…NPIECSQRSA (183 aa)) constitute an RHD domain. The DNA-binding element occupies 439 to 446 (RAHYETEG). The Nuclear localization signal signature appears at 682–684 (KRK). Residues 703–943 (TEPTDDYEPA…NDLSSTSTHS (241 aa)) form a transactivation domain B (TAD-B) region. Residues 787–912 (HLGLPQPAGE…SPNLAPIPVT (126 aa)) form a disordered region. A compositionally biased stretch (pro residues) spans 846–855 (SPSPPLPPAT). Positions 924-933 (YLDDVNEIIR) match the Nuclear export signal motif.

In terms of assembly, member of the multicomponent NFATC transcription complex that consists of at least two components, a pre-existing cytoplasmic component NFATC2 and an inducible nuclear component NFATC1. Other members such as NFATC4, NFATC3 or members of the activating protein-1 family, MAF, GATA4 and Cbp/p300 can also bind the complex. NFATC proteins bind to DNA as monomers. Interacts with HOMER2 and HOMER3; this interaction may compete with calcineurin/PPP3CA-binding and hence prevent NFATC1 dephosphorylation and activation. Interacts with TLE6/GRG6. In terms of processing, phosphorylated by NFATC-kinase and GSK3B; phosphorylation induces NFATC1 nuclear exit and dephosphorylation by calcineurin promotes nuclear import. Phosphorylation by PKA and DYRK2 negatively modulates nuclear accumulation, and promotes subsequent phosphorylation by GSK3B or casein kinase 1. As to expression, expressed in thymus, peripheral leukocytes as T-cells and spleen. Isoforms A are preferentially expressed in effector T-cells (thymus and peripheral leukocytes) whereas isoforms B and isoforms C are preferentially expressed in naive T-cells (spleen). Isoforms B are expressed in naive T-cells after first antigen exposure and isoforms A are expressed in effector T-cells after second antigen exposure. Isoforms IA are widely expressed but not detected in liver nor pancreas, neural expression is strongest in corpus callosum. Isoforms IB are expressed mostly in muscle, cerebellum, placenta and thymus, neural expression in fetal and adult brain, strongest in corpus callosum.

Its subcellular location is the cytoplasm. It is found in the nucleus. Functionally, plays a role in the inducible expression of cytokine genes in T-cells, especially in the induction of the IL-2 or IL-4 gene transcription. Also controls gene expression in embryonic cardiac cells. Could regulate not only the activation and proliferation but also the differentiation and programmed death of T-lymphocytes as well as lymphoid and non-lymphoid cells. Required for osteoclastogenesis and regulates many genes important for osteoclast differentiation and function. This Homo sapiens (Human) protein is Nuclear factor of activated T-cells, cytoplasmic 1 (NFATC1).